Reading from the N-terminus, the 927-residue chain is Disks large homolog 1 (927 aa).

An L27 domain is found at 4 to 64; sequence RKQDTQRALT…FYEVTLLDNP (61 aa). PDZ domains follow at residues 223 to 310, 318 to 405, and 466 to 547; these read EITL…RRRK, DIKL…AKPT, and KVVL…QYRP. An SH3 domain is found at 581-651; that stretch reads KRSLYVRALF…PSKRRVEKKE (71 aa). Residues 692 to 719 are disordered; it reads DQSEMETSDVDQHVTSNASDSESSYRGQ. Polar residues predominate over residues 704 to 717; that stretch reads HVTSNASDSESSYR. Residues 737-912 form the Guanylate kinase-like domain; that stretch reads SRPVIILGPT…IYNQIKQIIE (176 aa).

This sequence belongs to the MAGUK family.

The protein localises to the cell membrane. It is found in the endoplasmic reticulum membrane. It localises to the cell junction. Its subcellular location is the cytoplasm. The protein resides in the apical cell membrane. Essential multidomain scaffolding protein required for normal development. Recruits channels, receptors and signaling molecules to discrete plasma membrane domains in polarized cells. Promotes epithelial cell layer barrier function via maintaining cell-cell adhesion. May play a role in adherens junction assembly, signal transduction and cell proliferation. This Xenopus tropicalis (Western clawed frog) protein is Disks large homolog 1 (dlg1).